A 189-amino-acid chain; its full sequence is Anthranilate synthase component 2 (189 aa).

Residues 1 to 189 (MILIIDNYDS…QLLRNFLEYS (189 aa)) enclose the Glutamine amidotransferase type-1 domain. 52–54 (GPG) is an L-glutamine binding site. Residue cysteine 79 is the Nucleophile; for GATase activity of the active site. Residues glutamine 83 and 129 to 130 (SL) each bind L-glutamine. Active-site residues include histidine 169 and glutamate 171.

As to quaternary structure, tetramer of two components I and two components II.

The protein localises to the plastid. Its subcellular location is the chloroplast. It carries out the reaction chorismate + L-glutamine = anthranilate + pyruvate + L-glutamate + H(+). The protein operates within amino-acid biosynthesis; L-tryptophan biosynthesis; L-tryptophan from chorismate: step 1/5. The chain is Anthranilate synthase component 2 (trpG) from Pyropia yezoensis (Susabi-nori).